The sequence spans 326 residues: Beta-1,3-galactosyltransferase 1 (326 aa).

Topologically, residues 1-6 (MASKVS) are cytoplasmic. Residues 7–26 (CLYVLTVVCWASALWYLSIT) traverse the membrane as a helical; Signal-anchor for type II membrane protein segment. Residues 27-326 (RPTSSYTGSK…DMSSKKHLRC (300 aa)) lie on the Lumenal side of the membrane. N-linked (GlcNAc...) asparagine glycosylation is found at Asn47 and Asn151.

It belongs to the glycosyltransferase 31 family. Mn(2+) is required as a cofactor.

The protein localises to the golgi apparatus membrane. The catalysed reaction is an N-acetyl-beta-D-glucosaminyl derivative + UDP-alpha-D-galactose = a beta-D-galactosyl-(1-&gt;3)-N-acetyl-beta-D-glucosaminyl derivative + UDP + H(+). It carries out the reaction a beta-D-GlcNAc-(1-&gt;3)-beta-D-Gal-(1-&gt;4)-beta-D-Glc-(1&lt;-&gt;1)-Cer(d18:1(4E)) + UDP-alpha-D-galactose = a beta-D-Gal-(1-&gt;3)-beta-D-GlcNAc-(1-&gt;3)-beta-D-Gal-(1-&gt;4)-beta-D-Glc-(1&lt;-&gt;1')-Cer(d18:1(4E)) + UDP + H(+). Its pathway is protein modification; protein glycosylation. Beta-1,3-galactosyltransferase that transfers galactose from UDP-galactose to substrates with a terminal beta-N-acetylglucosamine (beta-GlcNAc) residue. Involved in the biosynthesis of the carbohydrate moieties of glycolipids and glycoproteins. This is Beta-1,3-galactosyltransferase 1 (B3GALT1) from Gorilla gorilla gorilla (Western lowland gorilla).